Consider the following 693-residue polypeptide: Golgin subfamily A member 6D (693 aa).

Residues 14–611 (LEESRQNKLA…KLLELQELVL (598 aa)) are a coiled coil. 3 disordered regions span residues 20-70 (NKLA…GDSQ), 497-547 (LPGE…GTEQ), and 662-693 (VEPAPGVAREGSPHNNPTVQQIVQLSPVMQDT). Basic and acidic residues predominate over residues 537–547 (LPKEKADGTEQ). Over residues 674–693 (PHNNPTVQQIVQLSPVMQDT) the composition is skewed to polar residues.

It belongs to the GOLGA6 family.

This Homo sapiens (Human) protein is Golgin subfamily A member 6D (GOLGA6D).